Here is a 489-residue protein sequence, read N- to C-terminus: Probable capsid protein (489 aa).

Residues 87-101 are compositionally biased toward basic and acidic residues; that stretch reads RMERGESSETKREQQ. Positions 87–111 are disordered; it reads RMERGESSETKREQQDLGATRKRKI. A Nuclear localization signal motif is present at residues 107 to 110; it reads RKRK. The CCHC-type zinc-finger motif lies at 409–426; that stretch reads CRCWICTEEGHYANECPN. Residues 466–489 are disordered; sequence ETTSEEESTTDSDSSSSDDEQLSF.

This sequence belongs to the caulimoviridae capsid protein family. Interacts (via nuclear localization signal) with host importin alpha.

It is found in the virion. The protein localises to the host nucleus. In terms of biological role, self assembles to form an icosahedral capsid, about 50 nm in diameter, nm, composed of 420 subunits of the viral capsid protein. The capsid encapsulates the genomic dsDNA. Following virus entry into host cell, provides nuclear import of the viral genome. Virus particles do not enter the nucleus, but dock at the nuclear membrane through the interaction with host importins. The protein is Probable capsid protein of Scrophularia californica (California bee plant).